Here is a 73-residue protein sequence, read N- to C-terminus: Long neurotoxin 2 (73 aa).

5 cysteine pairs are disulfide-bonded: C3-C21, C14-C42, C27-C31, C46-C57, and C58-C63.

It belongs to the three-finger toxin family. Long-chain subfamily. Type II alpha-neurotoxin sub-subfamily. As to expression, expressed by the venom gland.

The protein resides in the secreted. Functionally, binds with high affinity to muscular (alpha-1/CHRNA1) and neuronal (alpha-7/CHRNA7) nicotinic acetylcholine receptor (nAChR) and inhibits acetylcholine from binding to the receptor, thereby impairing neuromuscular and neuronal transmission. This is Long neurotoxin 2 from Ophiophagus hannah (King cobra).